A 130-amino-acid chain; its full sequence is Small ribosomal subunit protein uS8 (130 aa).

This sequence belongs to the universal ribosomal protein uS8 family. Part of the 30S ribosomal subunit. Contacts proteins S5 and S12.

Functionally, one of the primary rRNA binding proteins, it binds directly to 16S rRNA central domain where it helps coordinate assembly of the platform of the 30S subunit. The protein is Small ribosomal subunit protein uS8 of Psychromonas ingrahamii (strain DSM 17664 / CCUG 51855 / 37).